The sequence spans 327 residues: Zinc transport protein ZntB (327 aa).

At Met-1–Met-273 the chain is on the cytoplasmic side. The chain crosses the membrane as a helical span at residues Ala-274–Ile-294. The Periplasmic portion of the chain corresponds to Pro-295–Gln-300. A helical membrane pass occupies residues Phe-301–Leu-321. The Cytoplasmic segment spans residues His-322–Leu-327.

Belongs to the CorA metal ion transporter (MIT) (TC 1.A.35) family.

The protein localises to the cell inner membrane. The enzyme catalyses Zn(2+)(out) + H(+)(out) = Zn(2+)(in) + H(+)(in). In terms of biological role, zinc transporter. Acts as a Zn(2+):proton symporter, which likely mediates zinc ion uptake. This Enterobacter sp. (strain 638) protein is Zinc transport protein ZntB.